Reading from the N-terminus, the 306-residue chain is Porphobilinogen deaminase (306 aa).

Cysteine 240 carries the post-translational modification S-(dipyrrolylmethanemethyl)cysteine.

This sequence belongs to the HMBS family. In terms of assembly, monomer. Dipyrromethane serves as cofactor.

The catalysed reaction is 4 porphobilinogen + H2O = hydroxymethylbilane + 4 NH4(+). It functions in the pathway porphyrin-containing compound metabolism; protoporphyrin-IX biosynthesis; coproporphyrinogen-III from 5-aminolevulinate: step 2/4. In terms of biological role, tetrapolymerization of the monopyrrole PBG into the hydroxymethylbilane pre-uroporphyrinogen in several discrete steps. This is Porphobilinogen deaminase from Thiobacillus denitrificans (strain ATCC 25259 / T1).